Here is a 147-residue protein sequence, read N- to C-terminus: Ubiquitin-conjugating enzyme E2 D2B (147 aa).

The region spanning 1-147 (MALKRIHKEL…AREWTQKYAM (147 aa)) is the UBC core domain. Cys85 functions as the Glycyl thioester intermediate in the catalytic mechanism.

Belongs to the ubiquitin-conjugating enzyme family. As to quaternary structure, interacts with CNOT4 (via RING domain). Testis-specific. Mainly expressed in the round spermatids (at protein level).

It carries out the reaction S-ubiquitinyl-[E1 ubiquitin-activating enzyme]-L-cysteine + [E2 ubiquitin-conjugating enzyme]-L-cysteine = [E1 ubiquitin-activating enzyme]-L-cysteine + S-ubiquitinyl-[E2 ubiquitin-conjugating enzyme]-L-cysteine.. It functions in the pathway protein modification; protein ubiquitination. Its function is as follows. Catalyzes the covalent attachment of ubiquitin to other proteins. Mediates the selective degradation of short-lived and abnormal proteins. Functions in the E6/E6-AP-induced ubiquitination of p53/TP53. Mediates ubiquitination of PEX5 and SQSTM1 and autoubiquitination of STUB1 and TRAF6. Involved in the signal-induced conjugation and subsequent degradation of NFKBIA, FBXW2-mediated GCM1 ubiquitination and degradation, MDM2-dependent degradation of p53/TP53 and the activation of MAVS in the mitochondria by RIGI in response to viral infection Plays a role in early maturation of the testis. This Rattus norvegicus (Rat) protein is Ubiquitin-conjugating enzyme E2 D2B (Ube2d2b).